Reading from the N-terminus, the 211-residue chain is Protein FAM167A (211 aa).

Disordered stretches follow at residues 1-30 (MSVP…DHLR) and 56-108 (EEQT…GKLE). The stretch at 120 to 153 (LRKELMEMRLQDQQLARQLMRLRSDIHKLKIEQT) forms a coiled coil.

Belongs to the FAM167 (SEC) family.

The protein is Protein FAM167A (FAM167A) of Bos taurus (Bovine).